The sequence spans 607 residues: Chaperone protein DnaK (607 aa).

The residue at position 173 (Thr173) is a Phosphothreonine; by autocatalysis. A compositionally biased stretch (low complexity) spans Ala577 to Ser588. The disordered stretch occupies residues Ala577–Lys607. The span at Gln589 to Phe598 shows a compositional bias: acidic residues.

It belongs to the heat shock protein 70 family.

Its function is as follows. Acts as a chaperone. This Macrococcus caseolyticus (strain JCSC5402) (Macrococcoides caseolyticum) protein is Chaperone protein DnaK.